The chain runs to 466 residues: Tubulointerstitial nephritis antigen-like (466 aa).

The first 21 residues, 1–21 (MWGCWLGLLLLLLAGQAALEA), serve as a signal peptide directing secretion. Residues 49 to 96 (EQDMCCRGRADECALPYLGATCYCDLFCNRTVSDCCPDFWDFCLGIPP) enclose the SMB domain. Intrachain disulfides connect Cys-53-Cys-72, Cys-70-Cys-72, Cys-70-Cys-84, Cys-76-Cys-83, and Cys-84-Cys-91. Asn-77 carries N-linked (GlcNAc...) asparagine glycosylation. An N-linked (GlcNAc...) asparagine glycan is attached at Asn-160.

The protein belongs to the peptidase C1 family. Glycosylated. As to expression, highly expressed in kidney, heart and adrenocortical cells of adrenal glands. Moderately expressed in spleen and liver. Also found in prostate, seminal vesicle, epididymis and testis in male reproductive organs. In adrenal glands is found in the outer cortical regions corresponding to the zona glomerulosa (zG) and the undifferentiated cell zone (zU) (at protein level).

It localises to the secreted. Its function is as follows. May be implicated in the adrenocortical zonation and in mechanisms for repressing the CYP11B1 gene expression in adrenocortical cells. This is a non catalytic peptidase C1 family protein. In Mus musculus (Mouse), this protein is Tubulointerstitial nephritis antigen-like (Tinagl1).